A 328-amino-acid polypeptide reads, in one-letter code: MSMLAERRRKQKWAVDPQNTAWSNDDSKFGQRMLEKMGWSKGKGLGAQEQGATDHIKVQVKNNHLGLGATINNEDNWIAHQDDFNQLLAELNTCHGQETTDSSDKKEKKSFSLEEKSKISKNRVHYMKFTKGKDLSSRSKTDLDCIFGKRQSKKTPEGDASPSTPEENETTTTSAFTIQEYFAKRMAALKNKPQVPVPGSDISETQVERKRGKKRNKEATGKDVESYLQPKAKRHTEGKPERAEAQERVAKKKSAPAEEQLRGPCWDQSSKASAQDAGDHVQPPEGRDFTLKPKKRRGKKKLQKPVEIAEDATLEETLVKKKKKKDSK.

Disordered stretches follow at residues 1–28 (MSML…DDSK), 147–177 (FGKR…SAFT), and 189–307 (LKNK…KPVE). The G-patch domain occupies 26-72 (DSKFGQRMLEKMGWSKGKGLGAQEQGATDHIKVQVKNNHLGLGATIN). Low complexity predominate over residues 161–174 (SPSTPEENETTTTS). The span at 235 to 261 (HTEGKPERAEAQERVAKKKSAPAEEQL) shows a compositional bias: basic and acidic residues. The telomerase inhibitory domain (TID) stretch occupies residues 254-328 (SAPAEEQLRG…VKKKKKKDSK (75 aa)). Phosphoserine occurs at positions 270 and 273. Residues 287–297 (RDFTLKPKKRR) carry the TBM motif. The segment covering 292–303 (KPKKRRGKKKLQ) has biased composition (basic residues).

This sequence belongs to the PINX1 family. Interacts with MCRS1, TERT, TERF1, NCL/nucleolin, and the telomerase RNA. Post-translationally, cleaved by enterovirus protease 3C to promote apoptosis. In terms of tissue distribution, ubiquitous; expressed at low levels. Not detectable in a number of hepatocarcinoma cell lines.

It is found in the nucleus. The protein localises to the nucleolus. Its subcellular location is the chromosome. The protein resides in the telomere. It localises to the centromere. It is found in the kinetochore. Its function is as follows. Microtubule-binding protein essential for faithful chromosome segregation. Mediates TRF1 and TERT accumulation in nucleolus and enhances TRF1 binding to telomeres. Inhibits telomerase activity. May inhibit cell proliferation and act as tumor suppressor. In Homo sapiens (Human), this protein is PIN2/TERF1-interacting telomerase inhibitor 1 (PINX1).